The primary structure comprises 406 residues: Kelch domain-containing protein 2 (406 aa).

Kelch repeat units lie at residues 31-85 (ERSG…NTEG), 92-136 (SGSC…ERID), 148-207 (LGVW…IWSQ), 221-259 (HACA…NELI), 271-311 (HSLT…IKFN), and 322-359 (HTAC…IFSV).

In terms of assembly, component of a CRL2(KLHDC2) E3 ubiquitin-protein ligase complex, also named ECS(KLHDC2) complex, composed of CUL2, Elongin BC (ELOB and ELOC), RBX1 and substrate-specific adapter KLHDC2. May form oligomers as a KLHDC2-ELOB-ELOC complex; this interaction is autoinhibitory for the E3 ligase complex as the substrate-binding site of KLHDC2 is blocked in the oligomer. Interacts with CREB3; interaction is direct and specific as it does not interact with CREB1, ATF4, ATF6, JUN, FOS, CEBPA or herpes simplex virus transactivator VP16. Post-translationally, autoubiquitinated by the CRL2(KLHDC2) E3 ligase complex.

Its subcellular location is the nucleus. It participates in protein modification; protein ubiquitination. In terms of biological role, substrate-recognition component of a Cul2-RING (CRL2) E3 ubiquitin-protein ligase complex of the DesCEND (destruction via C-end degrons) pathway, which recognizes a C-degron located at the extreme C terminus of target proteins, leading to their ubiquitination and degradation. The C-degron recognized by the DesCEND pathway is usually a motif of less than ten residues and can be present in full-length proteins, truncated proteins or proteolytically cleaved forms. The CRL2(KLHDC2) complex specifically recognizes proteins with a diglycine (Gly-Gly) at the C-terminus, leading to their ubiquitination and degradation. The CRL2(KLHDC2) complex mediates ubiquitination and degradation of truncated SELENOK and SELENOS selenoproteins produced by failed UGA/Sec decoding, which end with a diglycine. The CRL2(KLHDC2) complex also recognizes proteolytically cleaved proteins ending with Gly-Gly, such as the N-terminal fragment of USP1, leading to their degradation. May also act as an indirect repressor of CREB3-mediated transcription by interfering with CREB3-DNA-binding. The polypeptide is Kelch domain-containing protein 2 (Bos taurus (Bovine)).